The primary structure comprises 157 residues: MKVLEGIVTAPNAKIAVVIARFNSFINESLLEGALDALKRIGQVKDENITLVRVPGAYELPLIARRLADSKKYDAIVALGTVIRGGTAHFEYVAGEASSGLGQVAMQAEIPVAFGVLTTENIEQAIERAGTKAGNKGAEAALVALEMVNLLAQIDKA.

5-amino-6-(D-ribitylamino)uracil-binding positions include F22, 57 to 59, and 81 to 83; these read AYE and TVI. Position 86-87 (86-87) interacts with (2S)-2-hydroxy-3-oxobutyl phosphate; that stretch reads GT. The active-site Proton donor is the H89. F114 provides a ligand contact to 5-amino-6-(D-ribitylamino)uracil. R128 lines the (2S)-2-hydroxy-3-oxobutyl phosphate pocket.

The protein belongs to the DMRL synthase family. In terms of assembly, forms an icosahedral capsid composed of 60 subunits, arranged as a dodecamer of pentamers.

It carries out the reaction (2S)-2-hydroxy-3-oxobutyl phosphate + 5-amino-6-(D-ribitylamino)uracil = 6,7-dimethyl-8-(1-D-ribityl)lumazine + phosphate + 2 H2O + H(+). It functions in the pathway cofactor biosynthesis; riboflavin biosynthesis; riboflavin from 2-hydroxy-3-oxobutyl phosphate and 5-amino-6-(D-ribitylamino)uracil: step 1/2. Catalyzes the formation of 6,7-dimethyl-8-ribityllumazine by condensation of 5-amino-6-(D-ribitylamino)uracil with 3,4-dihydroxy-2-butanone 4-phosphate. This is the penultimate step in the biosynthesis of riboflavin. In Histophilus somni (strain 129Pt) (Haemophilus somnus), this protein is 6,7-dimethyl-8-ribityllumazine synthase.